We begin with the raw amino-acid sequence, 286 residues long: Pantothenate synthetase (286 aa).

31 to 38 is an ATP binding site; that stretch reads MGALHEGH. The active-site Proton donor is the H38. (R)-pantoate is bound at residue Q65. Position 65 (Q65) interacts with beta-alanine. Residue 153 to 156 coordinates ATP; the sequence is GEKD. Q159 provides a ligand contact to (R)-pantoate. 190 to 193 is a binding site for ATP; the sequence is LSSR.

Belongs to the pantothenate synthetase family. In terms of assembly, homodimer.

It localises to the cytoplasm. It carries out the reaction (R)-pantoate + beta-alanine + ATP = (R)-pantothenate + AMP + diphosphate + H(+). The protein operates within cofactor biosynthesis; (R)-pantothenate biosynthesis; (R)-pantothenate from (R)-pantoate and beta-alanine: step 1/1. Functionally, catalyzes the condensation of pantoate with beta-alanine in an ATP-dependent reaction via a pantoyl-adenylate intermediate. In Corynebacterium diphtheriae (strain ATCC 700971 / NCTC 13129 / Biotype gravis), this protein is Pantothenate synthetase.